Consider the following 589-residue polypeptide: Ufm1-specific protease (589 aa).

Residues 1–22 form a disordered region; that stretch reads MTNSQTVSLIGPTQMAPQSTPP. Catalysis depends on residues C421, D545, and H547.

Belongs to the peptidase C78 family. As to quaternary structure, interacts with odr-4. In terms of tissue distribution, expressed in head and tail neurons. Expressed in the amphid head neurons ADL, ASI, ASH, ASJ, ASG, ADF, ASK, AWA, AWB, AWC, and in two tail neurons, the phasmid tail neurons PHA and PHB.

The protein localises to the endoplasmic reticulum membrane. It localises to the cytoplasm. Its subcellular location is the perinuclear region. Thiol protease which recognizes and hydrolyzes the peptide bond at the C-terminal Gly of ufm-1, a ubiquitin-like modifier protein bound to a number of target proteins. Required, with oct-4, for the localization of a subset of 7 transmembrane domain odorant receptors, including odr-10, to the cilia of olfactory neurons AWA and AWC. Operates in aggregation behavior, and responses to oxygen levels. The protein is Ufm1-specific protease of Caenorhabditis elegans.